The sequence spans 828 residues: Periplasmic nitrate reductase (828 aa).

Residues 1-31 (MKLSRRSFMKANAVAAAAAAAGLSVPGVARA) constitute a signal peptide (tat-type signal). In terms of domain architecture, 4Fe-4S Mo/W bis-MGD-type spans 39–95 (IKWDKAPCRFCGTGCGVLVGTQQGRVVACQGDPDAPVNRGLNCIKGYFLPKIMYGKD). The [4Fe-4S] cluster site is built by Cys46, Cys49, Cys53, and Cys81. Residues Lys83, Gln150, Asn175, Cys179, 212–219 (WGSNMAEM), 243–247 (STYQH), 262–264 (QSD), Met372, Gln376, Asn482, 508–509 (SD), Lys531, Asp558, and 718–727 (TGRVLEHWHT) each bind Mo-bis(molybdopterin guanine dinucleotide). Phe794 contributes to the substrate binding site. Residues Asn802 and Lys819 each coordinate Mo-bis(molybdopterin guanine dinucleotide).

It belongs to the prokaryotic molybdopterin-containing oxidoreductase family. NasA/NapA/NarB subfamily. In terms of assembly, component of the periplasmic nitrate reductase NapAB complex composed of NapA and NapB. [4Fe-4S] cluster serves as cofactor. The cofactor is Mo-bis(molybdopterin guanine dinucleotide). In terms of processing, predicted to be exported by the Tat system. The position of the signal peptide cleavage has not been experimentally proven.

It localises to the periplasm. It catalyses the reaction 2 Fe(II)-[cytochrome] + nitrate + 2 H(+) = 2 Fe(III)-[cytochrome] + nitrite + H2O. Catalytic subunit of the periplasmic nitrate reductase complex NapAB. Receives electrons from NapB and catalyzes the reduction of nitrate to nitrite. The chain is Periplasmic nitrate reductase from Escherichia coli O127:H6 (strain E2348/69 / EPEC).